We begin with the raw amino-acid sequence, 133 residues long: ATP synthase epsilon chain, chloroplastic (133 aa).

This sequence belongs to the ATPase epsilon chain family. As to quaternary structure, F-type ATPases have 2 components, CF(1) - the catalytic core - and CF(0) - the membrane proton channel. CF(1) has five subunits: alpha(3), beta(3), gamma(1), delta(1), epsilon(1). CF(0) has three main subunits: a, b and c.

It is found in the plastid. The protein localises to the chloroplast thylakoid membrane. Functionally, produces ATP from ADP in the presence of a proton gradient across the membrane. The protein is ATP synthase epsilon chain, chloroplastic of Phaeodactylum tricornutum (strain CCAP 1055/1).